A 609-amino-acid chain; its full sequence is Pescadillo homolog (609 aa).

The region spanning 320–413 (KLKNLFKGLK…KLLPTNKYFI (94 aa)) is the BRCT domain. Disordered regions lie at residues 443 to 462 (DEFE…DEDF) and 488 to 609 (ALNS…EILA). Basic and acidic residues-rich tracts occupy residues 444-453 (EFEKQERAEG) and 488-498 (ALNSGEAKKEQ). A coiled-coil region spans residues 481–509 (FREEKAEALNSGEAKKEQAEEDNEDDDQE). The segment covering 499–512 (AEEDNEDDDQEPDQ) has biased composition (acidic residues). 2 stretches are compositionally biased toward basic and acidic residues: residues 513 to 524 (DETKKQRSEKKQ) and 533 to 552 (VFKE…EALR). Residues 539–607 (KEQKQLTKQE…QKRKAQRKEI (69 aa)) adopt a coiled-coil conformation. Residues 554–564 (KMVKSRHKKLY) are compositionally biased toward basic residues. Positions 567–609 (LLDKQKKATKEANLLREKRQQIDKQKRKEQTQKRKAQRKEILA) are enriched in basic and acidic residues.

Belongs to the pescadillo family.

The protein localises to the nucleus. It is found in the nucleolus. Its subcellular location is the nucleoplasm. Its function is as follows. Required for maturation of ribosomal RNAs and formation of the large ribosomal subunit. This Aedes aegypti (Yellowfever mosquito) protein is Pescadillo homolog.